The chain runs to 481 residues: UDP-glucose 6-dehydrogenase 1 (481 aa).

NAD(+) is bound by residues 8 to 13, D33, R38, 86 to 90, 127 to 128, and E162; these read GAGYVG, VNTPT, and ST. Residues 158-162, 217-224, and 257-270 each bind substrate; these read EFLAE, KLAANAFL, and RIGAKFLNASVGFG. Catalysis depends on C273, which acts as the Nucleophile. NAD(+) is bound at residue 273-276; that stretch reads CFQK. 335–336 contacts substrate; sequence FK. Residue R343 participates in NAD(+) binding. The residue at position 394 (S394) is a Phosphoserine. R448 contacts substrate.

This sequence belongs to the UDP-glucose/GDP-mannose dehydrogenase family.

The catalysed reaction is UDP-alpha-D-glucose + 2 NAD(+) + H2O = UDP-alpha-D-glucuronate + 2 NADH + 3 H(+). Its pathway is nucleotide-sugar biosynthesis; UDP-alpha-D-glucuronate biosynthesis; UDP-alpha-D-glucuronate from UDP-alpha-D-glucose: step 1/1. In terms of biological role, involved in the biosynthesis of UDP-glucuronic acid (UDP-GlcA), providing nucleotide sugars for cell-wall polymers. The polypeptide is UDP-glucose 6-dehydrogenase 1 (UGD1) (Oryza sativa subsp. japonica (Rice)).